A 102-amino-acid polypeptide reads, in one-letter code: Small ribosomal subunit protein uS10 (102 aa).

The segment at 37–61 (PIPLPTKSLKITTRKSTDGEGSSSF) is disordered.

It belongs to the universal ribosomal protein uS10 family. Part of the 30S ribosomal subunit.

In terms of biological role, involved in the binding of tRNA to the ribosomes. This Methanococcus vannielii (strain ATCC 35089 / DSM 1224 / JCM 13029 / OCM 148 / SB) protein is Small ribosomal subunit protein uS10.